The sequence spans 72 residues: Translation initiation factor IF-1 (72 aa).

An S1-like domain is found at 1–72; it reads MAKEDMIEVE…TRGRITYRFK (72 aa).

This sequence belongs to the IF-1 family. As to quaternary structure, component of the 30S ribosomal translation pre-initiation complex which assembles on the 30S ribosome in the order IF-2 and IF-3, IF-1 and N-formylmethionyl-tRNA(fMet); mRNA recruitment can occur at any time during PIC assembly.

The protein resides in the cytoplasm. In terms of biological role, one of the essential components for the initiation of protein synthesis. Stabilizes the binding of IF-2 and IF-3 on the 30S subunit to which N-formylmethionyl-tRNA(fMet) subsequently binds. Helps modulate mRNA selection, yielding the 30S pre-initiation complex (PIC). Upon addition of the 50S ribosomal subunit IF-1, IF-2 and IF-3 are released leaving the mature 70S translation initiation complex. The protein is Translation initiation factor IF-1 of Enterococcus faecalis (strain ATCC 700802 / V583).